Consider the following 297-residue polypeptide: Probable GTP 3',8-cyclase (297 aa).

Residues 4–227 enclose the Radical SAM core domain; the sequence is RYGRQIRSFR…MQNRKKYVID (224 aa). GTP is bound at residue Arg13. Residues Cys20 and Cys24 each contribute to the [4Fe-4S] cluster site. Tyr26 is a binding site for S-adenosyl-L-methionine. A [4Fe-4S] cluster-binding site is contributed by Cys27. A GTP-binding site is contributed by Lys61. Gly65 lines the S-adenosyl-L-methionine pocket. Thr91 provides a ligand contact to GTP. Ser115 lines the S-adenosyl-L-methionine pocket. A GTP-binding site is contributed by Lys152. [4Fe-4S] cluster-binding residues include Cys243 and Cys246. A GTP-binding site is contributed by 248–250; the sequence is RIR. Cys260 contacts [4Fe-4S] cluster.

Belongs to the radical SAM superfamily. MoaA family. Requires [4Fe-4S] cluster as cofactor.

The enzyme catalyses GTP + AH2 + S-adenosyl-L-methionine = (8S)-3',8-cyclo-7,8-dihydroguanosine 5'-triphosphate + 5'-deoxyadenosine + L-methionine + A + H(+). Its pathway is cofactor biosynthesis; molybdopterin biosynthesis. Functionally, catalyzes the cyclization of GTP to (8S)-3',8-cyclo-7,8-dihydroguanosine 5'-triphosphate. This Methanococcus maripaludis (strain DSM 14266 / JCM 13030 / NBRC 101832 / S2 / LL) protein is Probable GTP 3',8-cyclase.